Here is a 375-residue protein sequence, read N- to C-terminus: Growth/differentiation factor 8 (375 aa).

The N-terminal stretch at 1–18 (MQKLQIFVYIYLFMLTVA) is a signal peptide. The propeptide occupies 19 to 266 (GPVDLNENSE…VTDTPKRARR (248 aa)). N-linked (GlcNAc...) asparagine glycosylation is found at Asn-48 and Asn-71. 4 disulfide bridges follow: Cys-272–Cys-282, Cys-281–Cys-340, Cys-309–Cys-372, and Cys-313–Cys-374.

This sequence belongs to the TGF-beta family. Homodimer; disulfide-linked. Interacts with WFIKKN2, leading to inhibit its activity. Interacts with FSTL3. Post-translationally, synthesized as large precursor molecule that undergoes proteolytic cleavage to generate an N-terminal propeptide and a disulfide linked C-terminal dimer, which is the biologically active molecule. The circulating form consists of a latent complex of the C-terminal dimer and other proteins, including its propeptide, which maintain the C-terminal dimer in a latent, inactive state. Ligand activation requires additional cleavage of the prodomain by a tolloid-like metalloproteinase.

It localises to the secreted. Acts specifically as a negative regulator of skeletal muscle growth. This chain is Growth/differentiation factor 8 (MSTN), found in Sylvicapra grimmia (Grey duiker).